The sequence spans 842 residues: Axin-1 (842 aa).

The tract at residues 1–75 is disordered; it reads MSVKGKGFPL…LDLGYEPEGS (75 aa). Polar residues predominate over residues 34–46; the sequence is TTDQRPFSHTYYS. In terms of domain architecture, RGS spans 88–211; it reads SLHSLLDDQD…LKSDIYLEYT (124 aa). Disordered stretches follow at residues 218-242, 277-297, 316-344, 414-451, 482-532, 543-562, 615-637, 656-675, and 729-754; these read PKNY…PTLN, SHCA…PGTW, TSAN…DGIP, KRVR…NSRY, KTPG…AKVD, YHHV…DGES, KKAD…EDSE, HKKS…TELA, and RLEE…KNVS. Positions 316 to 339 are enriched in polar residues; sequence TSANDSEQQSMSSDADTMSLTDSS. The tract at residues 348–433 is interaction with GSK3B; the sequence is LRKHYRREMQ…DGDVSSGPSV (86 aa). Residues 434 to 508 form an interaction with beta-catenin region; the sequence is ISHKLPSGPP…RSPDGHLSKT (75 aa). The segment covering 543-552 has biased composition (basic residues); sequence YHHVHHHGGV. A compositionally biased stretch (basic and acidic residues) spans 615–626; the sequence is KKADLGKSESAS. Residues 760–842 enclose the DIX domain; sequence CDNIVVAYYF…KIIGQVEKID (83 aa).

Homodimer. Interacts with hwa; leading to promote the tankyrase-mediated degradation of axin1. ADP-ribosylated by tankyrase tnks and tnks2. Poly-ADP-ribosylated protein is recognized by rnf146, followed by ubiquitination at 'Lys-48' and subsequent activation of the Wnt signaling pathway. Post-translationally, ubiquitinated by rnf146 when poly-ADP-ribosylated, leading to its degradation and subsequent activation of the Wnt signaling pathway.

The protein localises to the cytoplasm. It localises to the nucleus. The protein resides in the membrane. Its subcellular location is the cell membrane. Its function is as follows. Component of the beta-catenin destruction complex required for regulating ctnnb1 levels through phosphorylation and ubiquitination, and modulating Wnt-signaling. Controls dorsoventral patterning via two opposing effects; down-regulates ctnnb1 to inhibit the Wnt signaling pathway and ventralize embryos, but also dorsalizes embryos by activating a Wnt-independent JNK signaling pathway. The chain is Axin-1 (axin1) from Xenopus laevis (African clawed frog).